A 453-amino-acid chain; its full sequence is Tubulin alpha-2 chain (453 aa).

Position 11 (Gln11) interacts with GTP. Residue Lys40 is modified to N6-acetyllysine. 6 residues coordinate GTP: Glu71, Gly144, Thr145, Thr179, Asn206, and Asn228. Mg(2+) is bound at residue Glu71. Glu254 is a catalytic residue. Positions 432 to 453 (YEEVGAETAEGEGEEEDFGEEY) are disordered.

The protein belongs to the tubulin family. As to quaternary structure, dimer of alpha and beta chains. A typical microtubule is a hollow water-filled tube with an outer diameter of 25 nm and an inner diameter of 15 nM. Alpha-beta heterodimers associate head-to-tail to form protofilaments running lengthwise along the microtubule wall with the beta-tubulin subunit facing the microtubule plus end conferring a structural polarity. Microtubules usually have 13 protofilaments but different protofilament numbers can be found in some organisms and specialized cells. It depends on Mg(2+) as a cofactor. Post-translationally, undergoes a tyrosination/detyrosination cycle, the cyclic removal and re-addition of a C-terminal tyrosine residue by the enzymes tubulin tyrosine carboxypeptidase (TTCP) and tubulin tyrosine ligase (TTL), respectively. Acetylation of alpha chains at Lys-40 stabilizes microtubules and affects affinity and processivity of microtubule motors. This modification has a role in multiple cellular functions, ranging from cell motility, cell cycle progression or cell differentiation to intracellular trafficking and signaling.

The protein resides in the cytoplasm. It localises to the cytoskeleton. The catalysed reaction is GTP + H2O = GDP + phosphate + H(+). Its function is as follows. Tubulin is the major constituent of microtubules, a cylinder consisting of laterally associated linear protofilaments composed of alpha- and beta-tubulin heterodimers. Microtubules grow by the addition of GTP-tubulin dimers to the microtubule end, where a stabilizing cap forms. Below the cap, tubulin dimers are in GDP-bound state, owing to GTPase activity of alpha-tubulin. This chain is Tubulin alpha-2 chain (TUBA2), found in Pelvetia fastigiata (Brown alga).